Consider the following 167-residue polypeptide: Small ribosomal subunit protein uS9 (167 aa).

Residues 1–41 (MNTEAVAPDVAEEEVLTSYTSESSASADDAPKKERPALTVS) form a disordered region. The span at 17–26 (TSYTSESSAS) shows a compositional bias: polar residues.

Belongs to the universal ribosomal protein uS9 family.

The protein is Small ribosomal subunit protein uS9 of Renibacterium salmoninarum (strain ATCC 33209 / DSM 20767 / JCM 11484 / NBRC 15589 / NCIMB 2235).